The sequence spans 266 residues: Protein-ADP-ribose hydrolase (266 aa).

One can recognise a Macro domain in the interval 74–265; sequence TDLKDLKPIK…LYKEALNRDA (192 aa). ADP-D-ribose is bound by residues Asp93, Ile94, and Asn107. Positions 113, 118, and 120 each coordinate Zn(2+). Cys120, Ile121, Asp122, Ser212, Thr213, Gly214, and Phe216 together coordinate ADP-D-ribose.

It belongs to the MacroD-type family. Zn-Macro subfamily. In terms of assembly, monomer. Directly interacts with the lipoylated form of GcvH-L. The cofactor is Zn(2+).

The enzyme catalyses 4-O-(ADP-D-ribosyl)-L-aspartyl-[protein] + H2O = L-aspartyl-[protein] + ADP-D-ribose + H(+). ADP-ribosylhydrolase that specifically reverses the SirTM-mediated mono-ADP-ribosylation at an asparatate residue of GcvH-L (SAV0324), by releasing ADP-ribose from the target protein. May play a role in the regulation of the response to host-induced oxidative stress. In Staphylococcus aureus (strain Mu50 / ATCC 700699), this protein is Protein-ADP-ribose hydrolase.